A 55-amino-acid chain; its full sequence is Ribulose bisphosphate carboxylase large chain (55 aa).

H18 functions as the Proton acceptor in the catalytic mechanism. Substrate is bound by residues R19 and H27.

The protein belongs to the RuBisCO large chain family. Type I subfamily. As to quaternary structure, heterohexadecamer of 8 large chains and 8 small chains; disulfide-linked. The disulfide link is formed within the large subunit homodimers. Mg(2+) is required as a cofactor. In terms of processing, the disulfide bond which can form in the large chain dimeric partners within the hexadecamer appears to be associated with oxidative stress and protein turnover.

It is found in the plastid. Its subcellular location is the chloroplast. The catalysed reaction is 2 (2R)-3-phosphoglycerate + 2 H(+) = D-ribulose 1,5-bisphosphate + CO2 + H2O. It catalyses the reaction D-ribulose 1,5-bisphosphate + O2 = 2-phosphoglycolate + (2R)-3-phosphoglycerate + 2 H(+). Its function is as follows. RuBisCO catalyzes two reactions: the carboxylation of D-ribulose 1,5-bisphosphate, the primary event in carbon dioxide fixation, as well as the oxidative fragmentation of the pentose substrate in the photorespiration process. Both reactions occur simultaneously and in competition at the same active site. The polypeptide is Ribulose bisphosphate carboxylase large chain (Vitis sp. (Grape)).